The primary structure comprises 401 residues: Decapping and exoribonuclease protein (401 aa).

Positions Met1–Pro27 are disordered. A compositionally biased stretch (basic and acidic residues) spans Met7–Pro20. Residues Arg69, Glu114, and Trp149–Gly151 each bind substrate. Glu210 provides a ligand contact to Mg(2+). Substrate-binding residues include Cys235 and Glu252. Mg(2+) is bound by residues Glu252, Asp254, Glu271, and Leu272. Substrate is bound by residues Lys273 and Gln298.

It belongs to the DXO/Dom3Z family. Mg(2+) serves as cofactor.

The protein resides in the nucleus. It carries out the reaction a 5'-end triphospho-ribonucleoside in mRNA + H2O = a 5'-end phospho-ribonucleoside in mRNA + diphosphate + H(+). The enzyme catalyses a 5'-end NAD(+)-phospho-ribonucleoside in mRNA + H2O = a 5'-end phospho-ribonucleoside in mRNA + NAD(+) + H(+). It catalyses the reaction a 5'-end NAD(+)-phospho-ribonucleoside in snoRNA + H2O = a 5'-end phospho-ribonucleoside in snoRNA + NAD(+) + H(+). The catalysed reaction is a 5'-end (N(7)-methyl 5'-triphosphoguanosine)-ribonucleoside-ribonucleotide in mRNA + H2O = a (N(7)-methyl 5'-triphosphoguanosine)-nucleoside + a 5'-end phospho-ribonucleoside in mRNA + H(+). It carries out the reaction a 5'-end FAD-phospho-ribonucleoside in mRNA + H2O = a 5'-end phospho-ribonucleoside in mRNA + FAD + H(+). The enzyme catalyses a 5'-end CoA-ribonucleoside in mRNA + H2O = 3'-dephospho-CoA + a 5'-end phospho-ribonucleoside in mRNA + H(+). In terms of biological role, decapping enzyme for NAD-capped RNAs: specifically hydrolyzes the nicotinamide adenine dinucleotide (NAD) cap from a subset of RNAs by removing the entire NAD moiety from the 5'-end of an NAD-capped RNA. The NAD-cap is present at the 5'-end of some RNAs and snoRNAs. In contrast to the canonical 5'-end N7 methylguanosine (m7G) cap, the NAD cap promotes mRNA decay. Also acts as a non-canonical decapping enzyme that removes the entire cap structure of m7G capped or incompletely capped RNAs and mediates their subsequent degradation. Specifically degrades pre-mRNAs with a defective 5'-end m7G cap and is part of a pre-mRNA capping quality control. Has decapping activity toward incomplete 5'-end m7G cap mRNAs such as unmethylated 5'-end-capped RNA (cap0), while it has no activity toward 2'-O-ribose methylated m7G cap (cap1). Also has 5'-3' exoribonuclease activities: The 5'-end monophosphate RNA is then degraded by the 5'-3' exoribonuclease activity, enabling this enzyme to decap and degrade incompletely capped mRNAs. Also possesses RNA 5'-pyrophosphohydrolase activity by hydrolyzing the 5'-end triphosphate to release pyrophosphates. Exhibits decapping activity towards FAD-capped RNAs. Exhibits decapping activity towards dpCoA-capped RNAs in vitro. The sequence is that of Decapping and exoribonuclease protein from Xenopus laevis (African clawed frog).